The following is a 159-amino-acid chain: Defense protein l(2)34Fc (159 aa).

The signal sequence occupies residues 1 to 17 (MFRLLVLAACLAISVHA). Positions 18 to 159 (YSDGAPKAAC…GRVTKDIDVE (142 aa)) constitute a Reelin domain. Cys-27 and Cys-99 form a disulfide bridge.

This sequence belongs to the insect defense protein family.

The protein resides in the secreted. May have antimicrobial activity. A late response immune regulated gene that is negatively regulated by spz during the immune response. This Drosophila melanogaster (Fruit fly) protein is Defense protein l(2)34Fc (l(2)34Fc).